The sequence spans 450 residues: Bifunctional protein GlmU (450 aa).

The pyrophosphorylase stretch occupies residues 1–228; sequence MSTALVILAA…EAQTLGVNSR (228 aa). UDP-N-acetyl-alpha-D-glucosamine contacts are provided by residues 8 to 11, lysine 22, glutamine 75, 80 to 81, 103 to 105, glycine 140, glutamate 154, asparagine 169, and asparagine 226; these read LAAG, GT, and YGD. Aspartate 105 lines the Mg(2+) pocket. Residue asparagine 226 coordinates Mg(2+). The interval 229 to 249 is linker; the sequence is ADLAAADAIFQTRARAELLDL. An N-acetyltransferase region spans residues 250–450; the sequence is GVTLMAPETV…AKKASKQKET (201 aa). UDP-N-acetyl-alpha-D-glucosamine is bound by residues arginine 315 and lysine 333. Histidine 345 (proton acceptor) is an active-site residue. Tyrosine 348 and asparagine 359 together coordinate UDP-N-acetyl-alpha-D-glucosamine. Residues alanine 362, 368–369, serine 387, threonine 405, and arginine 422 each bind acetyl-CoA; that span reads NY.

In the N-terminal section; belongs to the N-acetylglucosamine-1-phosphate uridyltransferase family. This sequence in the C-terminal section; belongs to the transferase hexapeptide repeat family. In terms of assembly, homotrimer. Mg(2+) serves as cofactor.

The protein localises to the cytoplasm. It catalyses the reaction alpha-D-glucosamine 1-phosphate + acetyl-CoA = N-acetyl-alpha-D-glucosamine 1-phosphate + CoA + H(+). It carries out the reaction N-acetyl-alpha-D-glucosamine 1-phosphate + UTP + H(+) = UDP-N-acetyl-alpha-D-glucosamine + diphosphate. It functions in the pathway nucleotide-sugar biosynthesis; UDP-N-acetyl-alpha-D-glucosamine biosynthesis; N-acetyl-alpha-D-glucosamine 1-phosphate from alpha-D-glucosamine 6-phosphate (route II): step 2/2. Its pathway is nucleotide-sugar biosynthesis; UDP-N-acetyl-alpha-D-glucosamine biosynthesis; UDP-N-acetyl-alpha-D-glucosamine from N-acetyl-alpha-D-glucosamine 1-phosphate: step 1/1. The protein operates within bacterial outer membrane biogenesis; LPS lipid A biosynthesis. Catalyzes the last two sequential reactions in the de novo biosynthetic pathway for UDP-N-acetylglucosamine (UDP-GlcNAc). The C-terminal domain catalyzes the transfer of acetyl group from acetyl coenzyme A to glucosamine-1-phosphate (GlcN-1-P) to produce N-acetylglucosamine-1-phosphate (GlcNAc-1-P), which is converted into UDP-GlcNAc by the transfer of uridine 5-monophosphate (from uridine 5-triphosphate), a reaction catalyzed by the N-terminal domain. In Ruegeria pomeroyi (strain ATCC 700808 / DSM 15171 / DSS-3) (Silicibacter pomeroyi), this protein is Bifunctional protein GlmU.